A 205-amino-acid polypeptide reads, in one-letter code: Outer-membrane lipoprotein LolB (205 aa).

The first 17 residues, 1–17 (MFLRHVIVFSLIALLTG), serve as a signal peptide directing secretion. Cys18 is lipidated: N-palmitoyl cysteine. Cys18 is lipidated: S-diacylglycerol cysteine.

The protein belongs to the LolB family. As to quaternary structure, monomer.

It localises to the cell outer membrane. Its function is as follows. Plays a critical role in the incorporation of lipoproteins in the outer membrane after they are released by the LolA protein. This Pseudomonas syringae pv. syringae (strain B728a) protein is Outer-membrane lipoprotein LolB.